Here is a 469-residue protein sequence, read N- to C-terminus: Protein RUFY3 (469 aa).

A phosphothreonine mark is found at Thr-5 and Thr-12. 2 positions are modified to phosphoserine: Ser-34 and Ser-49. Thr-51 is modified (phosphothreonine). In terms of domain architecture, RUN spans Asp-95–Glu-227. Coiled coils occupy residues Asn-271–Glu-362 and Lys-422–Lys-463.

Interacts with PAK1. Interacts (via C-terminus) with Ras-related Rab-5 proteins. Interacts (via C-terminus) with Ras-related Rap-2 proteins. Interacts with PIK3CA and PIK3R1. Interacts (via N-terminus) with FSCN1; this interaction induces neuron axon development. Interacts with DBN1. Interacts (via the second coiled coil) with GTP-, but not GDP-bound ARL8A and ARL8B. Interacts with dynactin/DCTN1 and the dynein intermediate chain DYNC1I1/2. Directly interacts with DYNC1LI1. Phosphorylated by PAK1. Isoform 1 is partially phosphorylated. In terms of tissue distribution, overexpressed in gastric cancer cells and tissues (at protein level).

The protein localises to the cytoplasm. It localises to the endomembrane system. Its subcellular location is the cell projection. It is found in the invadopodium. The protein resides in the perikaryon. The protein localises to the growth cone. It localises to the filopodium. Its subcellular location is the lamellipodium. It is found in the lysosome. Functionally, ARL8 effector that promotes the coupling of endolysosomes to dynein-dynactin for retrograde transport along microtubules. Acts by binding both GTP-bound ARL8 and dynein-dynactin. In nonneuronal cells, promotes concentration of endolysosomes in the juxtanuclear area. In hippocampal neurons, drives retrograde transport of endolysosomes from the axon to the soma. Plays a role in the generation of neuronal polarity formation and axon growth. Implicated in the formation of a single axon by developing neurons. May inhibit the formation of additional axons by inhibition of PI3K in minor neuronal processes. Plays a role in the formation of F-actin-enriched protrusive structures at the cell periphery. Plays a role in cytoskeletal organization by regulating the subcellular localization of FSCN1 and DBN1 at axonal growth cones. This is Protein RUFY3 from Homo sapiens (Human).